Consider the following 320-residue polypeptide: Cytochrome f (320 aa).

The signal sequence occupies residues M1–A35. Residues Y36, C56, C59, and H60 each coordinate heme. The chain crosses the membrane as a helical span at residues V286–K306.

It belongs to the cytochrome f family. As to quaternary structure, the 4 large subunits of the cytochrome b6-f complex are cytochrome b6, subunit IV (17 kDa polypeptide, petD), cytochrome f and the Rieske protein, while the 4 small subunits are PetG, PetL, PetM and PetN. The complex functions as a dimer. Heme serves as cofactor.

Its subcellular location is the plastid. It is found in the chloroplast thylakoid membrane. Functionally, component of the cytochrome b6-f complex, which mediates electron transfer between photosystem II (PSII) and photosystem I (PSI), cyclic electron flow around PSI, and state transitions. The sequence is that of Cytochrome f from Crucihimalaya wallichii (Rock-cress).